Reading from the N-terminus, the 314-residue chain is Ribosomal protein L11 methyltransferase (314 aa).

Residues T161, G182, D204, and N248 each coordinate S-adenosyl-L-methionine.

The protein belongs to the methyltransferase superfamily. PrmA family.

It localises to the cytoplasm. The enzyme catalyses L-lysyl-[protein] + 3 S-adenosyl-L-methionine = N(6),N(6),N(6)-trimethyl-L-lysyl-[protein] + 3 S-adenosyl-L-homocysteine + 3 H(+). Its function is as follows. Methylates ribosomal protein L11. The sequence is that of Ribosomal protein L11 methyltransferase from Listeria welshimeri serovar 6b (strain ATCC 35897 / DSM 20650 / CCUG 15529 / CIP 8149 / NCTC 11857 / SLCC 5334 / V8).